Here is a 299-residue protein sequence, read N- to C-terminus: MSSIKIECVVSETYKIGESPVWEEKEGTLLFVDITGQKVCRWDPSTKKVQSVSVEAPIGSVALRKSGGYVLAMGNTFSALNWEDQSVTTLARVDEDKPNNRFNDGKVDPEGRFLAGTMSQEIRPAVVERNQGSLFTLYPDHSVVKHFDMVDISNGLDWSLDHKTLYYIDSLSFKVDALDYDMKTGKSSNRRTLYKLQQDEGIPDGMCIDAEGKLWVACYNGGRVIRIDPETGKQIQTVKLPIDKTTSCCFGGPDYSEMYVTSACDGMDEDWKKRQPQSGGIYKITGLGVKGIAPTAFAG.

Glutamate 18 is an a divalent metal cation binding site. Arginine 101, asparagine 103, and glutamate 121 together coordinate substrate. 2 residues coordinate a divalent metal cation: asparagine 154 and aspartate 204. Residue aspartate 204 is the Proton donor/acceptor of the active site.

This sequence belongs to the SMP-30/CGR1 family. Requires Zn(2+) as cofactor. The cofactor is Mn(2+). Ca(2+) serves as cofactor. Mg(2+) is required as a cofactor. Expressed in the liver, and in the pronephros from the late tadpole stage.

The protein resides in the cytoplasm. The catalysed reaction is D-glucono-1,5-lactone + H2O = D-gluconate + H(+). It participates in cofactor biosynthesis; L-ascorbate biosynthesis via UDP-alpha-D-glucuronate pathway; L-ascorbate from UDP-alpha-D-glucuronate: step 3/4. Gluconolactonase with low activity towards other sugar lactones, including gulonolactone and galactonolactone. Catalyzes a key step in ascorbic acid (vitamin C) biosynthesis. Can also hydrolyze diisopropyl phosphorofluoridate and phenylacetate (in vitro). Calcium-binding protein. Modulates Ca(2+) signaling, and Ca(2+)-dependent cellular processes and enzyme activities. The chain is Regucalcin from Xenopus laevis (African clawed frog).